Consider the following 339-residue polypeptide: Glycerol-3-phosphate dehydrogenase [NAD(P)+] (339 aa).

NADPH is bound by residues S13, W14, and K108. Sn-glycerol 3-phosphate-binding residues include K108, G139, and S141. NADPH is bound at residue A143. Sn-glycerol 3-phosphate-binding residues include K194, D247, S257, R258, and N259. K194 functions as the Proton acceptor in the catalytic mechanism. R258 serves as a coordination point for NADPH. V282 and E284 together coordinate NADPH.

Belongs to the NAD-dependent glycerol-3-phosphate dehydrogenase family.

It localises to the cytoplasm. It catalyses the reaction sn-glycerol 3-phosphate + NAD(+) = dihydroxyacetone phosphate + NADH + H(+). The catalysed reaction is sn-glycerol 3-phosphate + NADP(+) = dihydroxyacetone phosphate + NADPH + H(+). The protein operates within membrane lipid metabolism; glycerophospholipid metabolism. Catalyzes the reduction of the glycolytic intermediate dihydroxyacetone phosphate (DHAP) to sn-glycerol 3-phosphate (G3P), the key precursor for phospholipid synthesis. This chain is Glycerol-3-phosphate dehydrogenase [NAD(P)+], found in Streptococcus mutans serotype c (strain ATCC 700610 / UA159).